A 505-amino-acid polypeptide reads, in one-letter code: Sodium/sialic acid symporter NanT (505 aa).

A run of 5 helical transmembrane segments spans residues 9-29, 45-65, 80-100, 128-148, and 155-175; these read LNYIALFAYLGAIMAVGVYFA, IPGWAAGFSVFATTLSSITFM, IGQYVAIAILPIVFWFYIPFF, FMLFHIGRIAIVTYLTALALM, and PLMIVFLIGVLCIIYTFLGGI. Na(+) is bound at residue alanine 56. N-acetyl-alpha-neuraminate is bound at residue threonine 58. Na(+) is bound at residue leucine 59. 4 residues coordinate N-acetyl-alpha-neuraminate: serine 60, threonine 63, glutamine 82, and arginine 135. A Na(+)-binding site is contributed by aspartate 182. Helical transmembrane passes span 183–203, 227–247, 280–300, and 318–338; these read VIQGVMLSVAAILIFVVICFN, FSWSWTDSTIPVLMIGFFFAS, LVACVPIFFFAVGSALFAYYT, and FYVISQMPVGVAGLIIAAIFA. Positions 339, 342, 343, 345, and 346 each coordinate Na(+). Transmembrane regions (helical) follow at residues 378 to 398, 406 to 426, 435 to 455, and 457 to 477; these read TLTVVAGLLGVVASTYLIMSN, FNSLLGLMGGPMTGLFMLGIF, ALLGVVASIATVLWVRSATDL, and FFFYGVIGTLMVVIVGYLTAP.

This sequence belongs to the sodium:solute symporter (SSF) (TC 2.A.21) family.

Its subcellular location is the cell inner membrane. It carries out the reaction N-acetyl-alpha-neuraminate(out) + 2 Na(+)(out) = N-acetyl-alpha-neuraminate(in) + 2 Na(+)(in). Symporter that uses the Na(+) gradient as the driving force for the uptake of the sialic acid N-acetylneuraminic acid (Neu5Ac). Might play a role in persistence after colonization. This chain is Sodium/sialic acid symporter NanT, found in Aliivibrio fischeri (strain ATCC 700601 / ES114) (Vibrio fischeri).